The chain runs to 505 residues: ATP synthase subunit beta (505 aa).

ATP is bound at residue 157-164 (GGAGVGKT).

It belongs to the ATPase alpha/beta chains family. In terms of assembly, F-type ATPases have 2 components, CF(1) - the catalytic core - and CF(0) - the membrane proton channel. CF(1) has five subunits: alpha(3), beta(3), gamma(1), delta(1), epsilon(1). CF(0) has three main subunits: a(1), b(2) and c(9-12). The alpha and beta chains form an alternating ring which encloses part of the gamma chain. CF(1) is attached to CF(0) by a central stalk formed by the gamma and epsilon chains, while a peripheral stalk is formed by the delta and b chains.

Its subcellular location is the cell inner membrane. It catalyses the reaction ATP + H2O + 4 H(+)(in) = ADP + phosphate + 5 H(+)(out). Functionally, produces ATP from ADP in the presence of a proton gradient across the membrane. The catalytic sites are hosted primarily by the beta subunits. This chain is ATP synthase subunit beta, found in Bacteroides fragilis (strain ATCC 25285 / DSM 2151 / CCUG 4856 / JCM 11019 / LMG 10263 / NCTC 9343 / Onslow / VPI 2553 / EN-2).